We begin with the raw amino-acid sequence, 170 residues long: Adenine phosphoribosyltransferase (170 aa).

The protein belongs to the purine/pyrimidine phosphoribosyltransferase family. As to quaternary structure, homodimer.

It localises to the cytoplasm. The catalysed reaction is AMP + diphosphate = 5-phospho-alpha-D-ribose 1-diphosphate + adenine. The protein operates within purine metabolism; AMP biosynthesis via salvage pathway; AMP from adenine: step 1/1. Functionally, catalyzes a salvage reaction resulting in the formation of AMP, that is energically less costly than de novo synthesis. This is Adenine phosphoribosyltransferase from Acholeplasma laidlawii (strain PG-8A).